The primary structure comprises 206 residues: Small ribosomal subunit protein uS4 (206 aa).

In terms of domain architecture, S4 RNA-binding spans 96 to 156 (TRLDNVVYRM…EKSRTQARIK (61 aa)).

The protein belongs to the universal ribosomal protein uS4 family. In terms of assembly, part of the 30S ribosomal subunit. Contacts protein S5. The interaction surface between S4 and S5 is involved in control of translational fidelity.

Functionally, one of the primary rRNA binding proteins, it binds directly to 16S rRNA where it nucleates assembly of the body of the 30S subunit. With S5 and S12 plays an important role in translational accuracy. This chain is Small ribosomal subunit protein uS4, found in Shewanella halifaxensis (strain HAW-EB4).